The chain runs to 222 residues: Eukaryotic translation initiation factor 3 subunit K (222 aa).

The 163-residue stretch at 46–208 folds into the PCI domain; sequence YDLEANLAVL…KIKTKNITEK (163 aa).

Belongs to the eIF-3 subunit K family. As to quaternary structure, component of the eukaryotic translation initiation factor 3 (eIF-3) complex. The eIF-3 complex interacts with pix.

It localises to the cytoplasm. Component of the eukaryotic translation initiation factor 3 (eIF-3) complex, which is involved in protein synthesis of a specialized repertoire of mRNAs and, together with other initiation factors, stimulates binding of mRNA and methionyl-tRNAi to the 40S ribosome. The eIF-3 complex specifically targets and initiates translation of a subset of mRNAs involved in cell proliferation. The protein is Eukaryotic translation initiation factor 3 subunit K of Drosophila sechellia (Fruit fly).